The following is a 325-amino-acid chain: GMP reductase (325 aa).

The Thioimidate intermediate role is filled by cysteine 174. An NADP(+)-binding site is contributed by 203 to 226 (LIADGGIRTHGDIAKSIRFGASMV).

This sequence belongs to the IMPDH/GMPR family. GuaC type 2 subfamily.

The catalysed reaction is IMP + NH4(+) + NADP(+) = GMP + NADPH + 2 H(+). Its function is as follows. Catalyzes the irreversible NADPH-dependent deamination of GMP to IMP. It functions in the conversion of nucleobase, nucleoside and nucleotide derivatives of G to A nucleotides, and in maintaining the intracellular balance of A and G nucleotides. The protein is GMP reductase of Staphylococcus aureus (strain MRSA252).